Here is a 366-residue protein sequence, read N- to C-terminus: Transcription factor IIIA (366 aa).

9 consecutive C2H2-type zinc fingers follow at residues 35 to 59 (YICSFADCGAAYNKNWKLQAHLCKH), 65 to 89 (FPCKEEGCEKGFTSLHHLTRHSLTH), 95 to 120 (FTCDSDGCDLRFTTKANMKKHFNRFH), 127 to 151 (YVCHFENCGKAFKKHNQLKVHQFSH), 157 to 181 (YECPHEGCDKRFSLPSRLKRHEKVH), 184 to 210 (YPCKKDDSCSFVGKTWTLYLKHVAECH), 214 to 236 (AVCDVCNRKFRHKDYLRDHQKTH), 243 to 268 (YLCPRDGCDRSYTTAFNLRSHIQSFH), and 274 to 298 (FVCEHAGCGKCFAMKKSLERHSVVH). The residue at position 38 (Ser-38) is a Phosphoserine; by CK2. Positions 299–310 (DPEKRKLKEKCP) are enriched in basic and acidic residues. The interval 299–366 (DPEKRKLKEK…SLVLDKLTIQ (68 aa)) is disordered. The residue at position 336 (Ser-336) is a Phosphoserine; by CK2; in vitro.

Post-translationally, the N-terminus is blocked. As to expression, synthesized in oocytes and, in much lower levels, in somatic cells.

The protein resides in the nucleus. Involved in ribosomal large subunit biogenesis. Acts both as a positive transcription factor for 5S RNA genes, and as a specific RNA binding protein that complexes with 5S RNA in oocytes to form the 7S ribonucleoprotein storage particle. May play an essential role in the developmental change in 5S RNA gene expression. Interacts with the internal control region (ICR) of approximately 50 bases within the 5S RNA genes, is required for correct transcription of these genes by RNA polymerase III. Also binds the transcribed 5S RNA's. In Xenopus laevis (African clawed frog), this protein is Transcription factor IIIA (gtf3a).